The following is a 222-amino-acid chain: 7-cyano-7-deazaguanine synthase (222 aa).

14–24 (FSGGQDSTTCL) is a binding site for ATP. The Zn(2+) site is built by Cys190, Cys199, Cys202, and Cys205.

The protein belongs to the QueC family. Homodimer. Zn(2+) serves as cofactor.

The catalysed reaction is 7-carboxy-7-deazaguanine + NH4(+) + ATP = 7-cyano-7-deazaguanine + ADP + phosphate + H2O + H(+). It participates in purine metabolism; 7-cyano-7-deazaguanine biosynthesis. Catalyzes the ATP-dependent conversion of 7-carboxy-7-deazaguanine (CDG) to 7-cyano-7-deazaguanine (preQ(0)). The chain is 7-cyano-7-deazaguanine synthase from Staphylococcus aureus (strain Mu3 / ATCC 700698).